We begin with the raw amino-acid sequence, 1862 residues long: MANLEESFPRGGTRKLHKSEKSSQQVVEQDNLFDVSTEEGPIKRKKSQKGPAKTKKLKIEKRKSIKSIKEKFEILSLESLCEGMRILGCVKEVSELELVVSLPNGLQGFVQVTEVCDAYTQKLNEQVAQEEPLEDLLRLPELFSPGMLVRCVVSSLDVTESGKKSVKLSVNPKRVNKVLSADALRPGMLLTGTVSSLEDHGYLVDIGVGGTRAFLSLKKAQEYIRQKNKGAKFKVGQYLTCVVEEVKSNGGVVSLSVEHSEVSSAFATEEQSWNLNNLLPGLLVKAQVQKVTQFGLQLNFLTFFKGLVDFMHLEPKKMGSYSSNQTVKACILCVHPRTRVVRLSLRPIFLHPGRPLTRISYQQLGAVLDDVPVQGFFKNAGAIFRLKDGVLAYARVSHLSDSKKAFNAEAFKPGSTHKCRIIDYSQMDELALLSLRKSIIAAPFLRYHDIKIGTVVKGTVLAIKPFGILVKVGEQIKGLVPSMHLADIMMKNPEKKYSPGDEVKCRVLLCDPEAKKLIMTLKKTLVTSKLSLITCYEGAKPGLQTHGVIIRVKDYGCIVKFYNDVQGLVPKHELSTQHIPDPETVFYTGQVVKVAVLSCEPSKERMLLSFRLLSDSRPKDPGVESSQKKTGAVRIGQLVDVKVLEKTKTGLEVAILPHNTPAFLPTPHLSDHAANGPLLHHWLQTGDTLHRVLCLSQSERHILLCRKPALVSTVEGGQDPKSLSEIQPGMLLIGFVKCIKEYGVFVQFPSGLSGLSPKTIMSDKFVTTPSEHFVEGQTVVAKVTNVDESKQRMLLSLRLSDCSLGDSASTSFLLLCQCLEELQGIRSLMSNQDSVLIQTLADMTPGMVLDAVVHEVLEDGSVVFSSDPVPDLVLRASRYHRAGQEVEPGQKKKVVVLHVDMLKLEVHVSLHQDLVNRKTRKLRKSSRHQGIVQHLEESFAVASLVETGHLVAFSLISHLNDTFHFDSEKLRVGQGVCLTLKTTEPGVTGLILAVEGPASKRTRMPVQRDSETVDDKGEEKEEEEEEEEKEEENLTVKSKKRHSLAIGDKVTGTIKAVKATHVVVTLADGFVGCIHASRILDDVPVGTSPTTTLKAGKKVTARVIGGRDVKTSKFLPISHPRFVLTILELSVRPSELKGSYSALNTHSESPVEKIRQYQAGQTVTCFFKKYNVMKKWLEVDIGPDIRGRIPLLLTSLSFKVLKHPDKKFQVGQAIEATVVDPDVPRAFLCLSLIGPYRLEEGEVAMGRVMKVVPNRGLTVSFPFGKIGKVSMFHLSDSYSEAPLEDFCPQKIVRCYILSTAHRVLALSLRSSRTNRETKNRIEDPEINSIEDVKEGQLLRGYVKCVLPSSVIIGLGPSVLGLAKYSHVSECVPPEKELYNGCLPEGKLVTAKVLRVNPMKNLIELSLLPSDTGRPDVFSPAPEPKQEERSGGAEEGQKRKEKNQKRREEKEEPQKSQRGGRGKRERQESESEQELVNKRPKKSGAAEEDDSGVEVYYREGEDEVGEPKLPPRGKQTKSTEVPRLHLSSGFLWDVGLDSLTPALPLREESSDSEDEQPHQAKKKKGKKERELEKQKAEKELSRIEEALMDPGRQPESADDFDRLVLSSPNSSILWLQYMAFHLQATEIEKARAVAERALKTISFREEQEKLNVWVALLNLENMYGSQESLTKVFERAVQYNEPLKVFLHLADIYTKSEKYKEAGELYNRMLKRFRQEKAVWIKYGAFVLGRSQAGASHRVLQRALECLPAKEHVDVIVKFAQLEFQLGDVERAKAIFENTLSTYPKRTDVWSVYIDMTIKHGSQTAVRDIFERVIHLSLAPKRMKFFFKRYLDYEKQHGTEKDVQAVKAKALEYVEAKSSALED.

The disordered stretch occupies residues 1 to 56; the sequence is MANLEESFPRGGTRKLHKSEKSSQQVVEQDNLFDVSTEEGPIKRKKSQKGPAKTKK. Residue A2 is modified to N-acetylalanine. Position 7 is a phosphoserine (S7). Over residues 43 to 56 the composition is skewed to basic residues; sequence KRKKSQKGPAKTKK. S1 motif domains follow at residues 83–171, 187–258, 281–346, and 365–436; these read GMRI…LSVN, GMLL…LSVE, GLLV…LSLR, and GAVL…LSLR. S438 carries the phosphoserine modification. 5 consecutive S1 motif domains span residues 453-522, 542-611, 636-707, 729-798, and 846-911; these read GTVV…MTLK, GLQT…LSFR, GQLV…LCRK, GMLL…LSLR, and GMVL…VSLH. A disordered region spans residues 999–1036; that stretch reads SKRTRMPVQRDSETVDDKGEEKEEEEEEEEKEEENLTV. The segment covering 1006–1019 has biased composition (basic and acidic residues); that stretch reads VQRDSETVDDKGEE. Acidic residues predominate over residues 1020–1033; the sequence is KEEEEEEEEKEEEN. S1 motif domains lie at 1047 to 1120, 1160 to 1233, 1241 to 1309, and 1335 to 1407; these read GDKV…ISHP, GQTV…LSLI, GEVA…LSLR, and GQLL…LSLL. 2 disordered regions span residues 1406–1520 and 1545–1577; these read LLPS…STEV and REESSDSEDEQPHQAKKKKGKKERELEKQKAEK. Composition is skewed to basic and acidic residues over residues 1423–1437 and 1445–1454; these read PKQEERSGGAEEGQK and RREEKEEPQK. K1424 is covalently cross-linked (Glycyl lysine isopeptide (Lys-Gly) (interchain with G-Cter in SUMO2)). S1468 and S1490 each carry phosphoserine. A compositionally biased stretch (basic and acidic residues) spans 1566–1577; that stretch reads KERELEKQKAEK. HAT repeat units follow at residues 1590 to 1622, 1696 to 1728, 1766 to 1798, and 1800 to 1835; these read GRQPESADDFDRLVLSSPNSSILWLQYMAFHLQ, EKYKEAGELYNRMLKRFRQEKAVWIKYGAFVLG, GDVERAKAIFENTLSTYPKRTDVWSVYIDMTIK, and GSQTAVRDIFERVIHLSLAPKRMKFFFKRYLDYEKQ.

In terms of assembly, interacts with NF-kappa-B p50/NFKB1 and NF-kappa-B p65/RELA. As to expression, ubiquitous.

The protein localises to the nucleus. It localises to the nucleolus. In terms of biological role, essential for the generation of mature 18S rRNA, specifically necessary for cleavages at sites A0, 1 and 2 of the 47S precursor. Directly interacts with U3 snoRNA. The polypeptide is Protein RRP5 homolog (Pdcd11) (Mus musculus (Mouse)).